The primary structure comprises 176 residues: Large ribosomal subunit protein uL10 (176 aa).

This sequence belongs to the universal ribosomal protein uL10 family. In terms of assembly, part of the ribosomal stalk of the 50S ribosomal subunit. The N-terminus interacts with L11 and the large rRNA to form the base of the stalk. The C-terminus forms an elongated spine to which L12 dimers bind in a sequential fashion forming a multimeric L10(L12)X complex.

In terms of biological role, forms part of the ribosomal stalk, playing a central role in the interaction of the ribosome with GTP-bound translation factors. The protein is Large ribosomal subunit protein uL10 of Acaryochloris marina (strain MBIC 11017).